The primary structure comprises 234 residues: Purine nucleoside phosphorylase DeoD-type (234 aa).

Residue H5 participates in a purine D-ribonucleoside binding. Phosphate is bound by residues G21, R25, R44, and 88 to 91 (RIGS). Residues 180-182 (EME) and 204-205 (SD) each bind a purine D-ribonucleoside. D205 acts as the Proton donor in catalysis.

It belongs to the PNP/UDP phosphorylase family. Homohexamer; trimer of homodimers.

The enzyme catalyses a purine D-ribonucleoside + phosphate = a purine nucleobase + alpha-D-ribose 1-phosphate. The catalysed reaction is a purine 2'-deoxy-D-ribonucleoside + phosphate = a purine nucleobase + 2-deoxy-alpha-D-ribose 1-phosphate. Functionally, catalyzes the reversible phosphorolytic breakdown of the N-glycosidic bond in the beta-(deoxy)ribonucleoside molecules, with the formation of the corresponding free purine bases and pentose-1-phosphate. The sequence is that of Purine nucleoside phosphorylase DeoD-type from Colwellia psychrerythraea (strain 34H / ATCC BAA-681) (Vibrio psychroerythus).